A 339-amino-acid chain; its full sequence is HPr kinase/phosphorylase (339 aa).

Catalysis depends on residues His-153 and Lys-174. Residue 168-175 (GKSGLGKS) coordinates ATP. Ser-175 contacts Mg(2+). Asp-192 (proton acceptor; for phosphorylation activity. Proton donor; for dephosphorylation activity) is an active-site residue. Positions 216-225 (MEIRGLGVVD) are important for the catalytic mechanism of both phosphorylation and dephosphorylation. Glu-217 provides a ligand contact to Mg(2+). Residue Arg-258 is part of the active site. Residues 279–284 (PINPGK) form an important for the catalytic mechanism of dephosphorylation region.

Belongs to the HPrK/P family. Homohexamer. The cofactor is Mg(2+).

The enzyme catalyses [HPr protein]-L-serine + ATP = [HPr protein]-O-phospho-L-serine + ADP + H(+). The catalysed reaction is [HPr protein]-O-phospho-L-serine + phosphate + H(+) = [HPr protein]-L-serine + diphosphate. Catalyzes the ATP- as well as the pyrophosphate-dependent phosphorylation of a specific serine residue in HPr, a phosphocarrier protein of the phosphoenolpyruvate-dependent sugar phosphotransferase system (PTS). HprK/P also catalyzes the pyrophosphate-producing, inorganic phosphate-dependent dephosphorylation (phosphorolysis) of seryl-phosphorylated HPr (P-Ser-HPr). The chain is HPr kinase/phosphorylase from Chlorobium phaeobacteroides (strain BS1).